Reading from the N-terminus, the 154-residue chain is 6,7-dimethyl-8-ribityllumazine synthase (154 aa).

5-amino-6-(D-ribitylamino)uracil-binding positions include Trp22, 56 to 58 (AWE), and 80 to 82 (CVV). 85-86 (DT) provides a ligand contact to (2S)-2-hydroxy-3-oxobutyl phosphate. His88 functions as the Proton donor in the catalytic mechanism. Asn113 is a 5-amino-6-(D-ribitylamino)uracil binding site. Residue Arg127 coordinates (2S)-2-hydroxy-3-oxobutyl phosphate.

Belongs to the DMRL synthase family. In terms of assembly, forms an icosahedral capsid composed of 60 subunits, arranged as a dodecamer of pentamers.

It carries out the reaction (2S)-2-hydroxy-3-oxobutyl phosphate + 5-amino-6-(D-ribitylamino)uracil = 6,7-dimethyl-8-(1-D-ribityl)lumazine + phosphate + 2 H2O + H(+). Its pathway is cofactor biosynthesis; riboflavin biosynthesis; riboflavin from 2-hydroxy-3-oxobutyl phosphate and 5-amino-6-(D-ribitylamino)uracil: step 1/2. Catalyzes the formation of 6,7-dimethyl-8-ribityllumazine by condensation of 5-amino-6-(D-ribitylamino)uracil with 3,4-dihydroxy-2-butanone 4-phosphate. This is the penultimate step in the biosynthesis of riboflavin. This Xylella fastidiosa (strain 9a5c) protein is 6,7-dimethyl-8-ribityllumazine synthase.